The sequence spans 185 residues: Large ribosomal subunit protein uL16m (185 aa).

The protein belongs to the universal ribosomal protein uL16 family.

It localises to the mitochondrion. The polypeptide is Large ribosomal subunit protein uL16m (RPL16) (Oryza sativa subsp. japonica (Rice)).